Reading from the N-terminus, the 100-residue chain is Urease subunit gamma (100 aa).

It belongs to the urease gamma subunit family. In terms of assembly, heterotrimer of UreA (gamma), UreB (beta) and UreC (alpha) subunits. Three heterotrimers associate to form the active enzyme.

The protein localises to the cytoplasm. The enzyme catalyses urea + 2 H2O + H(+) = hydrogencarbonate + 2 NH4(+). It participates in nitrogen metabolism; urea degradation; CO(2) and NH(3) from urea (urease route): step 1/1. The sequence is that of Urease subunit gamma from Bacillus sp. (strain TB-90).